We begin with the raw amino-acid sequence, 154 residues long: MKPSFSINSNYLFKRFFGKNFEAGIELCLQIIKDSLQLSFQPEFALMIVSPWKMKRLNRQFLNRKGVTDVISICYNENEAGFSPAIGEIFLCPKHIFKQAKQFGCTPWFLLTRNLIHGLLHLFEFDHEQSLAFESVTMFFQDEIHETVLKLWNR.

Zn(2+) contacts are provided by His-117, His-121, and His-127.

This sequence belongs to the endoribonuclease YbeY family. Requires Zn(2+) as cofactor.

It is found in the cytoplasm. Its function is as follows. Single strand-specific metallo-endoribonuclease involved in late-stage 70S ribosome quality control and in maturation of the 3' terminus of the 16S rRNA. The chain is Endoribonuclease YbeY from Mycoplasma pneumoniae (strain ATCC 29342 / M129 / Subtype 1) (Mycoplasmoides pneumoniae).